Reading from the N-terminus, the 427-residue chain is O-methyltransferase PaMT (427 aa).

The S-adenosyl-L-methionine site is built by Trp-230 and Asp-281. The Proton acceptor role is filled by His-326.

Belongs to the class I-like SAM-binding methyltransferase superfamily. Cation-independent O-methyltransferase family. COMT subfamily. Requires S-adenosyl-L-methionine as cofactor.

The protein operates within mycotoxin biosynthesis. Functionally, O-methyltransferase; part of the 2 gene clusters that mediate the biosynthesis of fusicoccins, diterpene glucosides that display phytohormone-like activity and function as potent activators of plasma membrane H(+)-ATPases in plants by modifying 14-3-3 proteins and cause the plant disease constriction canker. The first step in the pathway is performed by the fusicoccadiene synthase PaFS that possesses both prenyl transferase and terpene cyclase activity, converting isopentenyl diphosphate and dimethylallyl diphosphate into geranylgeranyl diphosphate (GGDP) and successively converting GGDP into fusicocca-2,10(14)-diene, a precursor for fusicoccin H. The second step is the oxidation at the C-8 position by the cytochrome P450 monooxygenase PaP450-2 to yield fusicocca-2,10(14)-diene-8-beta-ol. The cytochrome P450 monooxygenase PaP450-1 then catalyzes the hydroxylation at the C-16 position to produce fusicocca-2,10(14)-diene-8-beta,16-diol. The dioxygenase fc-dox then catalyzes the 16-oxydation of fusicocca-2,10(14)-diene-8-beta,16-diol to yield an aldehyde (8-beta-hydroxyfusicocca-1,10(14)-dien-16-al). The short-chain dehydrogenase/reductase fc-sdr catalyzes the reduction of the aldehyde to yield fusicocca-1,10(14)-diene-8-beta,16-diol. The next step is the hydroxylation at C-9 performed by the cytochrome P450 monooxygenase PaP450-3 that leads to fusicoccin H aglycon which is glycosylated to fusicoccin H by the O-glycosyltransferase PaGT. Hydroxylation at C-12 by the cytochrome P450 monooxygenase PaP450-4 leads then to the production of fusicoccin Q and is followed by methylation by the O-methyltransferase PaMT to yield fusicoccin P. Fusicoccin P is further converted to fusicoccin J via prenylation by the O-glucose prenyltransferase PaPT. Cytochrome P450 monooxygenase PaP450-5 then performs hydroxylation at C-19 to yield dideacetyl-fusicoccin A which is acetylated to 3'-O-deacetyl-fusicoccin A by the O-acetyltransferase PaAT-2. Finally, a another acetylation by the O-acetyltransferase PaAT-1 yields fusicoccin A. This chain is O-methyltransferase PaMT, found in Phomopsis amygdali (Fusicoccum amygdali).